A 144-amino-acid polypeptide reads, in one-letter code: D-aminoacyl-tRNA deacylase (144 aa).

Positions 136-137 (GP) match the Gly-cisPro motif, important for rejection of L-amino acids motif.

The protein belongs to the DTD family. In terms of assembly, homodimer.

It is found in the cytoplasm. It carries out the reaction glycyl-tRNA(Ala) + H2O = tRNA(Ala) + glycine + H(+). The catalysed reaction is a D-aminoacyl-tRNA + H2O = a tRNA + a D-alpha-amino acid + H(+). Its function is as follows. An aminoacyl-tRNA editing enzyme that deacylates mischarged D-aminoacyl-tRNAs. Also deacylates mischarged glycyl-tRNA(Ala), protecting cells against glycine mischarging by AlaRS. Acts via tRNA-based rather than protein-based catalysis; rejects L-amino acids rather than detecting D-amino acids in the active site. By recycling D-aminoacyl-tRNA to D-amino acids and free tRNA molecules, this enzyme counteracts the toxicity associated with the formation of D-aminoacyl-tRNA entities in vivo and helps enforce protein L-homochirality. The polypeptide is D-aminoacyl-tRNA deacylase (Haemophilus influenzae (strain 86-028NP)).